The sequence spans 147 residues: Large ribosomal subunit protein uL11 (147 aa).

This sequence belongs to the universal ribosomal protein uL11 family. As to quaternary structure, part of the ribosomal stalk of the 50S ribosomal subunit. Interacts with L10 and the large rRNA to form the base of the stalk. L10 forms an elongated spine to which L12 dimers bind in a sequential fashion forming a multimeric L10(L12)X complex. In terms of processing, one or more lysine residues are methylated.

Forms part of the ribosomal stalk which helps the ribosome interact with GTP-bound translation factors. This chain is Large ribosomal subunit protein uL11, found in Parabacteroides distasonis (strain ATCC 8503 / DSM 20701 / CIP 104284 / JCM 5825 / NCTC 11152).